The following is a 167-amino-acid chain: Small ribosomal subunit protein uS5 (167 aa).

An S5 DRBM domain is found at L11–V74.

Belongs to the universal ribosomal protein uS5 family. In terms of assembly, part of the 30S ribosomal subunit. Contacts proteins S4 and S8.

In terms of biological role, with S4 and S12 plays an important role in translational accuracy. Functionally, located at the back of the 30S subunit body where it stabilizes the conformation of the head with respect to the body. In Shigella dysenteriae serotype 1 (strain Sd197), this protein is Small ribosomal subunit protein uS5.